Here is a 311-residue protein sequence, read N- to C-terminus: Ribosomal RNA small subunit methyltransferase H (311 aa).

S-adenosyl-L-methionine-binding positions include Gly34–His36, Asp54, Phe80, Asp104, and Gln111.

This sequence belongs to the methyltransferase superfamily. RsmH family.

Its subcellular location is the cytoplasm. The catalysed reaction is cytidine(1402) in 16S rRNA + S-adenosyl-L-methionine = N(4)-methylcytidine(1402) in 16S rRNA + S-adenosyl-L-homocysteine + H(+). In terms of biological role, specifically methylates the N4 position of cytidine in position 1402 (C1402) of 16S rRNA. The chain is Ribosomal RNA small subunit methyltransferase H from Teredinibacter turnerae (strain ATCC 39867 / T7901).